Reading from the N-terminus, the 154-residue chain is Lipoprotein signal peptidase (154 aa).

Transmembrane regions (helical) follow at residues 7 to 27 (VLYL…KNYI), 58 to 78 (IFSG…AVVV), and 88 to 108 (NWLF…NFID). Catalysis depends on residues D117 and D133. The chain crosses the membrane as a helical span at residues 128–148 (IFNIADSAITVGIVLVFIYLI).

This sequence belongs to the peptidase A8 family.

It is found in the cell membrane. The enzyme catalyses Release of signal peptides from bacterial membrane prolipoproteins. Hydrolyzes -Xaa-Yaa-Zaa-|-(S,diacylglyceryl)Cys-, in which Xaa is hydrophobic (preferably Leu), and Yaa (Ala or Ser) and Zaa (Gly or Ala) have small, neutral side chains.. The protein operates within protein modification; lipoprotein biosynthesis (signal peptide cleavage). Functionally, this protein specifically catalyzes the removal of signal peptides from prolipoproteins. The polypeptide is Lipoprotein signal peptidase (Lactobacillus gasseri (strain ATCC 33323 / DSM 20243 / BCRC 14619 / CIP 102991 / JCM 1131 / KCTC 3163 / NCIMB 11718 / NCTC 13722 / AM63)).